The primary structure comprises 163 residues: Putative pre-16S rRNA nuclease (163 aa).

Belongs to the YqgF nuclease family.

The protein resides in the cytoplasm. In terms of biological role, could be a nuclease involved in processing of the 5'-end of pre-16S rRNA. This Roseobacter denitrificans (strain ATCC 33942 / OCh 114) (Erythrobacter sp. (strain OCh 114)) protein is Putative pre-16S rRNA nuclease.